Consider the following 556-residue polypeptide: Acetyl-coenzyme A thioesterase (556 aa).

Residues 6-118 (APGEVLMSQA…FSTFVAKPVG (113 aa)) form the HotDog ACOT-type 1 domain. Lys-34 is subject to N6-succinyllysine. Residues 54-56 (TAS) and 83-85 (STS) contribute to the CoA site. An N6-succinyllysine modification is found at Lys-97. Arg-145 contributes to the CoA binding site. Lys-160 and Lys-229 each carry N6-succinyllysine. The HotDog ACOT-type 2 domain occupies 180 to 295 (MGTSVQSIEL…FLIYNAVDDQ (116 aa)). Residue 235-237 (KFR) participates in CoA binding. The START domain maps to 327 to 536 (GRKYVISHKK…GGWSKSIEEA (210 aa)).

As to quaternary structure, homodimer or homotetramer.

It localises to the cytoplasm. Its subcellular location is the cytosol. The catalysed reaction is acetyl-CoA + H2O = acetate + CoA + H(+). It carries out the reaction butanoyl-CoA + H2O = butanoate + CoA + H(+). It catalyses the reaction hexanoyl-CoA + H2O = hexanoate + CoA + H(+). It functions in the pathway lipid metabolism; fatty acid metabolism. Allosterically regulated by ATP (activator) and ADP (inhibitor). Cold labile, it dissociates into inactive monomers at low temperature. Catalyzes the hydrolysis of acyl-CoAs into free fatty acids and coenzyme A (CoASH), regulating their respective intracellular levels. Preferentially hydrolyzes acetyl-CoA. In Mus musculus (Mouse), this protein is Acetyl-coenzyme A thioesterase (Acot12).